Consider the following 313-residue polypeptide: Protein PALE CRESS, chloroplastic (313 aa).

The N-terminal 22 residues, 1-22 (MAATSLVLTCASPLFSSPRVIS), are a transit peptide targeting the chloroplast.

In terms of tissue distribution, expressed in green tissues, including leaves. Accumulates in chloroplasts of mature stomatal guard cells.

The protein localises to the plastid. It is found in the chloroplast. It localises to the chromoplast. Its subcellular location is the etioplast. The protein resides in the amyloplast. Its function is as follows. Required for the differentiation of chloroplast from proplastids or etioplasts, probably by modulating some chloroplast-encoded genes expression and mRNA maturation. Involved in leaf-cells differentiation. This Arabidopsis thaliana (Mouse-ear cress) protein is Protein PALE CRESS, chloroplastic (PAC).